A 201-amino-acid chain; its full sequence is 3-isopropylmalate dehydratase small subunit (201 aa).

This sequence belongs to the LeuD family. LeuD type 1 subfamily. Heterodimer of LeuC and LeuD.

It carries out the reaction (2R,3S)-3-isopropylmalate = (2S)-2-isopropylmalate. The protein operates within amino-acid biosynthesis; L-leucine biosynthesis; L-leucine from 3-methyl-2-oxobutanoate: step 2/4. In terms of biological role, catalyzes the isomerization between 2-isopropylmalate and 3-isopropylmalate, via the formation of 2-isopropylmaleate. The protein is 3-isopropylmalate dehydratase small subunit of Cronobacter sakazakii (strain ATCC BAA-894) (Enterobacter sakazakii).